The following is a 363-amino-acid chain: MSKLKDPMDDSLKNKLNKEKAIELARVQIEKDFGKGSLIKMGESPVGKYLESIPSGSILLDEAIGIGGYPRGRVVEIFGPESSGKTTLTLQAIAEIQKTGGIAAFIDAEHALDPVYARALGVNINELWLSQPDTGEQALDIAEYLIRSGGVDLIVVDSVAALTPQAEIDGEMGDTQIGLQARLMSKALRKITAILSKSNTCIMFINQIRMKIGLVFGSPETTTGGNALKFYSSLRLEVRKVEQVIGSSSDNVIGNKIRVKVVKNKVAPPFRKAELIVYFGKGISREASILDAAIKYNLVQKSGSWYAMGDDNLGQGRENVIEYLFKEKALANELENKLRKIIFESPSQDSLTVDISKSEENKE.

79–86 (GPESSGKT) serves as a coordination point for ATP.

The protein belongs to the RecA family.

It is found in the cytoplasm. Functionally, can catalyze the hydrolysis of ATP in the presence of single-stranded DNA, the ATP-dependent uptake of single-stranded DNA by duplex DNA, and the ATP-dependent hybridization of homologous single-stranded DNAs. It interacts with LexA causing its activation and leading to its autocatalytic cleavage. This Borrelia duttonii (strain Ly) protein is Protein RecA.